A 1150-amino-acid chain; its full sequence is PAN2-PAN3 deadenylation complex catalytic subunit PAN2 (1150 aa).

WD repeat units follow at residues 26–67 (AHHS…MEFQ), 114–156 (GHVN…ITKE), 158–194 (PAPN…VINT), and 290–328 (GHTH…VSFV). The linker stretch occupies residues 326–471 (SFVDQGLPVE…IRTDIESLKS (146 aa)). Residues 472 to 862 (VVPNMYHLFE…TPLVVMFQLK (391 aa)) form the USP domain. The Exonuclease domain occupies 911–1079 (AIDAEFVLAK…HDSIEDANTA (169 aa)). The a divalent metal cation site is built by D913, E915, D1022, and D1075. The interval 1118 to 1150 (GQSAQRTETPPMVDDAQPGALLPYQPPELLQGS) is disordered.

It belongs to the peptidase C19 family. PAN2 subfamily. In terms of assembly, forms a heterotrimer with an asymmetric homodimer of the regulatory subunit PAN3 to form the poly(A)-nuclease (PAN) deadenylation complex. Requires a divalent metal cation as cofactor.

The protein localises to the cytoplasm. It carries out the reaction Exonucleolytic cleavage of poly(A) to 5'-AMP.. Its activity is regulated as follows. Positively regulated by the regulatory subunit PAN3. Functionally, catalytic subunit of the poly(A)-nuclease (PAN) deadenylation complex, one of two cytoplasmic mRNA deadenylases involved in mRNA turnover. PAN specifically shortens poly(A) tails of RNA and the activity is stimulated by poly(A)-binding protein PAB1. PAN deadenylation is followed by rapid degradation of the shortened mRNA tails by the CCR4-NOT complex. Deadenylated mRNAs are then degraded by two alternative mechanisms, namely exosome-mediated 3'-5' exonucleolytic degradation, or deadenylation-dependent mRNA decaping and subsequent 5'-3' exonucleolytic degradation by XRN1. May also be involved in post-transcriptional maturation of mRNA poly(A) tails. In Pyricularia oryzae (strain 70-15 / ATCC MYA-4617 / FGSC 8958) (Rice blast fungus), this protein is PAN2-PAN3 deadenylation complex catalytic subunit PAN2.